The primary structure comprises 288 residues: Ribosomal RNA small subunit methyltransferase A (288 aa).

Positions 28, 30, 55, 77, 103, and 123 each coordinate S-adenosyl-L-methionine.

It belongs to the class I-like SAM-binding methyltransferase superfamily. rRNA adenine N(6)-methyltransferase family. RsmA subfamily.

It localises to the cytoplasm. The catalysed reaction is adenosine(1518)/adenosine(1519) in 16S rRNA + 4 S-adenosyl-L-methionine = N(6)-dimethyladenosine(1518)/N(6)-dimethyladenosine(1519) in 16S rRNA + 4 S-adenosyl-L-homocysteine + 4 H(+). Specifically dimethylates two adjacent adenosines (A1518 and A1519) in the loop of a conserved hairpin near the 3'-end of 16S rRNA in the 30S particle. May play a critical role in biogenesis of 30S subunits. This chain is Ribosomal RNA small subunit methyltransferase A, found in Xanthobacter autotrophicus (strain ATCC BAA-1158 / Py2).